The sequence spans 110 residues: U12-hexatoxin-Hi1a (110 aa).

The first 18 residues, Met-1–Gly-18, serve as a signal peptide directing secretion. Cystine bridges form between Cys-72–Cys-86, Cys-79–Cys-91, and Cys-85–Cys-104.

As to expression, expressed by the venom gland.

The protein resides in the secreted. In terms of biological role, probable ion channel inhibitor. The chain is U12-hexatoxin-Hi1a from Hadronyche infensa (Fraser island funnel-web spider).